We begin with the raw amino-acid sequence, 706 residues long: Polyribonucleotide nucleotidyltransferase (706 aa).

Residues Asp-487 and Asp-493 each coordinate Mg(2+). Residues 553–612 enclose the KH domain; the sequence is PRLFTMKINQDKIREVIGKGGETIRAITAETGTEINIAEDGTITIAATTQEAGDAAKKRI. One can recognise an S1 motif domain in the interval 622–692; it reads GKVYEGTVVK…DRGRVRLSIK (71 aa).

Belongs to the polyribonucleotide nucleotidyltransferase family. Mg(2+) serves as cofactor.

The protein localises to the cytoplasm. The catalysed reaction is RNA(n+1) + phosphate = RNA(n) + a ribonucleoside 5'-diphosphate. Functionally, involved in mRNA degradation. Catalyzes the phosphorolysis of single-stranded polyribonucleotides processively in the 3'- to 5'-direction. This Neisseria meningitidis serogroup A / serotype 4A (strain DSM 15465 / Z2491) protein is Polyribonucleotide nucleotidyltransferase.